The chain runs to 238 residues: Ribonuclease PH (238 aa).

Phosphate-binding positions include Arg-86 and Gly-124–Arg-126.

This sequence belongs to the RNase PH family. In terms of assembly, homohexameric ring arranged as a trimer of dimers.

The catalysed reaction is tRNA(n+1) + phosphate = tRNA(n) + a ribonucleoside 5'-diphosphate. Phosphorolytic 3'-5' exoribonuclease that plays an important role in tRNA 3'-end maturation. Removes nucleotide residues following the 3'-CCA terminus of tRNAs; can also add nucleotides to the ends of RNA molecules by using nucleoside diphosphates as substrates, but this may not be physiologically important. Probably plays a role in initiation of 16S rRNA degradation (leading to ribosome degradation) during starvation. This Caulobacter vibrioides (strain ATCC 19089 / CIP 103742 / CB 15) (Caulobacter crescentus) protein is Ribonuclease PH.